A 163-amino-acid polypeptide reads, in one-letter code: Nucleotide-binding protein LBJ_2391 (163 aa).

This sequence belongs to the YajQ family.

Nucleotide-binding protein. The sequence is that of Nucleotide-binding protein LBJ_2391 from Leptospira borgpetersenii serovar Hardjo-bovis (strain JB197).